The sequence spans 395 residues: 8-amino-7-oxononanoate synthase (395 aa).

Position 108–109 (108–109) interacts with pyridoxal 5'-phosphate; the sequence is GF. Position 134 (H134) interacts with substrate. Residues S184, 209–212, and 240–243 each bind pyridoxal 5'-phosphate; these read DDAH and TLSK. An N6-(pyridoxal phosphate)lysine modification is found at K243. Residue T357 participates in substrate binding.

The protein belongs to the class-II pyridoxal-phosphate-dependent aminotransferase family. BioF subfamily. As to quaternary structure, homodimer. Requires pyridoxal 5'-phosphate as cofactor.

It carries out the reaction 6-carboxyhexanoyl-[ACP] + L-alanine + H(+) = (8S)-8-amino-7-oxononanoate + holo-[ACP] + CO2. Its pathway is cofactor biosynthesis; biotin biosynthesis. Catalyzes the decarboxylative condensation of pimeloyl-[acyl-carrier protein] and L-alanine to produce 8-amino-7-oxononanoate (AON), [acyl-carrier protein], and carbon dioxide. In Fervidobacterium nodosum (strain ATCC 35602 / DSM 5306 / Rt17-B1), this protein is 8-amino-7-oxononanoate synthase.